The following is a 441-amino-acid chain: Glutamyl-tRNA reductase (441 aa).

Residues 64–67 (TCNR), serine 123, 128–130 (ETQ), and glutamine 134 each bind substrate. Cysteine 65 acts as the Nucleophile in catalysis. 203–208 (GAGEMI) is an NADP(+) binding site.

The protein belongs to the glutamyl-tRNA reductase family. As to quaternary structure, homodimer.

It catalyses the reaction (S)-4-amino-5-oxopentanoate + tRNA(Glu) + NADP(+) = L-glutamyl-tRNA(Glu) + NADPH + H(+). It functions in the pathway porphyrin-containing compound metabolism; protoporphyrin-IX biosynthesis; 5-aminolevulinate from L-glutamyl-tRNA(Glu): step 1/2. In terms of biological role, catalyzes the NADPH-dependent reduction of glutamyl-tRNA(Glu) to glutamate 1-semialdehyde (GSA). In Burkholderia pseudomallei (strain K96243), this protein is Glutamyl-tRNA reductase.